The sequence spans 137 residues: Nucleoside diphosphate kinase (137 aa).

Residues K9, F57, R85, T91, R102, and N112 each coordinate ATP. H115 functions as the Pros-phosphohistidine intermediate in the catalytic mechanism.

The protein belongs to the NDK family. As to quaternary structure, homotetramer. Requires Mg(2+) as cofactor.

The protein localises to the cytoplasm. The enzyme catalyses a 2'-deoxyribonucleoside 5'-diphosphate + ATP = a 2'-deoxyribonucleoside 5'-triphosphate + ADP. It catalyses the reaction a ribonucleoside 5'-diphosphate + ATP = a ribonucleoside 5'-triphosphate + ADP. In terms of biological role, major role in the synthesis of nucleoside triphosphates other than ATP. The ATP gamma phosphate is transferred to the NDP beta phosphate via a ping-pong mechanism, using a phosphorylated active-site intermediate. The sequence is that of Nucleoside diphosphate kinase from Campylobacter lari (strain RM2100 / D67 / ATCC BAA-1060).